We begin with the raw amino-acid sequence, 517 residues long: Amidophosphoribosyltransferase (517 aa).

Met-1 is subject to N-acetylmethionine. Residues Met-1–Glu-11 constitute a propeptide that is removed on maturation. Cys-12 (nucleophile) is an active-site residue. In terms of domain architecture, Glutamine amidotransferase type-2 spans Cys-12–His-261. A [4Fe-4S] cluster-binding site is contributed by Cys-280. The Mg(2+) site is built by Ser-327, Asp-389, and Asp-390. 3 residues coordinate [4Fe-4S] cluster: Cys-426, Cys-503, and Cys-506.

It in the C-terminal section; belongs to the purine/pyrimidine phosphoribosyltransferase family. As to quaternary structure, homotetramer. Requires Mg(2+) as cofactor. The cofactor is [4Fe-4S] cluster. Expressed at a high level in brain, heart, liver and stomach.

The catalysed reaction is 5-phospho-beta-D-ribosylamine + L-glutamate + diphosphate = 5-phospho-alpha-D-ribose 1-diphosphate + L-glutamine + H2O. It functions in the pathway purine metabolism; IMP biosynthesis via de novo pathway; N(1)-(5-phospho-D-ribosyl)glycinamide from 5-phospho-alpha-D-ribose 1-diphosphate: step 1/2. Its activity is regulated as follows. Activated by the substrate 5-phospho-alpha-D-ribosyl-1-pyrophosphate and inhibited by the purine ribonucleotides, the end products of purine biosynthesis. In terms of biological role, catalyzes the formation of phosphoribosylamine from phosphoribosylpyrophosphate (PRPP) and glutamine. This chain is Amidophosphoribosyltransferase (Ppat), found in Rattus norvegicus (Rat).